The sequence spans 571 residues: Glutamate--tRNA ligase (571 aa).

Positions 38–48 match the 'HIGH' region motif; that stretch reads PSPTGFMHIGG. The short motif at 316 to 320 is the 'KMSKS' region element; sequence KLSKR. K319 is an ATP binding site.

Belongs to the class-I aminoacyl-tRNA synthetase family. Glutamate--tRNA ligase type 1 subfamily. In terms of assembly, monomer.

It is found in the cytoplasm. The catalysed reaction is tRNA(Glu) + L-glutamate + ATP = L-glutamyl-tRNA(Glu) + AMP + diphosphate. Functionally, catalyzes the attachment of glutamate to tRNA(Glu) in a two-step reaction: glutamate is first activated by ATP to form Glu-AMP and then transferred to the acceptor end of tRNA(Glu). The polypeptide is Glutamate--tRNA ligase (Sorangium cellulosum (strain So ce56) (Polyangium cellulosum (strain So ce56))).